A 443-amino-acid chain; its full sequence is Thymidine phosphorylase (443 aa).

This sequence belongs to the thymidine/pyrimidine-nucleoside phosphorylase family. Homodimer.

It catalyses the reaction thymidine + phosphate = 2-deoxy-alpha-D-ribose 1-phosphate + thymine. The protein operates within pyrimidine metabolism; dTMP biosynthesis via salvage pathway; dTMP from thymine: step 1/2. The enzymes which catalyze the reversible phosphorolysis of pyrimidine nucleosides are involved in the degradation of these compounds and in their utilization as carbon and energy sources, or in the rescue of pyrimidine bases for nucleotide synthesis. In Shewanella baltica (strain OS155 / ATCC BAA-1091), this protein is Thymidine phosphorylase.